The following is a 106-amino-acid chain: uncharacterized protein (106 aa).

Residues arginine 54–lysine 106 are disordered. Residues serine 84 to serine 94 show a composition bias toward low complexity.

This is an uncharacterized protein from Human adenovirus C serotype 2 (HAdV-2).